We begin with the raw amino-acid sequence, 356 residues long: tRNA (guanine(26)-N(2))-dimethyltransferase (356 aa).

The 348-residue stretch at 5–352 (VLRREGTVEF…VSAGEVERVL (348 aa)) folds into the Trm1 methyltransferase domain. Residues R40, R67, D85, D111, and A112 each coordinate S-adenosyl-L-methionine.

This sequence belongs to the class I-like SAM-binding methyltransferase superfamily. Trm1 family.

It carries out the reaction guanosine(26) in tRNA + 2 S-adenosyl-L-methionine = N(2)-dimethylguanosine(26) in tRNA + 2 S-adenosyl-L-homocysteine + 2 H(+). In terms of biological role, dimethylates a single guanine residue at position 26 of a number of tRNAs using S-adenosyl-L-methionine as donor of the methyl groups. The sequence is that of tRNA (guanine(26)-N(2))-dimethyltransferase from Pyrobaculum arsenaticum (strain DSM 13514 / JCM 11321 / PZ6).